The sequence spans 450 residues: MRECISIHIGQAGIQVGNACWELYCLEHGIQPDGQMPGDKTVGGGDDAFNTFFSETGAGKHVPRAVFVDLEPTVIDEVRTGTYRQLFHPEQLISGKEDAANNFARGHYTIGKEIVDLCLDRIRKLADNCTGLQGFLVFNAVGGGTGSGLGSLLLERLSVDYGKKSKLGFTVYPSPQVSTSVVEPYNSVLSTHSLLEHTDVAVLLDNEAIYDICRRSLDIERPTYTNLNRLVSQVISSLTASLRFDGALNVDVTEFQTNLVPYPRIHFMLSSYAPVISAEKAYHEQLSVAEITNSAFEPSSMMAKCDPRHGKYMACCLMYRGDVVPKDVNAAVATIKTKRTIQFVDWCPTGFKCGINYQPPTVVPGGDLAKVQRAVCMISNSTSVAEVFSRIDHKFDLMYAKRAFVHWYVGEGMEEGEFSEAREDLAALEKDYEEVGAESAEGEDDEGDDY.

Gln-11 is a binding site for GTP. N6-acetyllysine is present on Lys-40. GTP-binding residues include Glu-71, Gly-144, Thr-145, Thr-179, Asn-206, and Asn-228. Glu-71 is a binding site for Mg(2+). Residue Glu-254 is part of the active site.

It belongs to the tubulin family. Dimer of alpha and beta chains. A typical microtubule is a hollow water-filled tube with an outer diameter of 25 nm and an inner diameter of 15 nM. Alpha-beta heterodimers associate head-to-tail to form protofilaments running lengthwise along the microtubule wall with the beta-tubulin subunit facing the microtubule plus end conferring a structural polarity. Microtubules usually have 13 protofilaments but different protofilament numbers can be found in some organisms and specialized cells. It depends on Mg(2+) as a cofactor. Post-translationally, undergoes a tyrosination/detyrosination cycle, the cyclic removal and re-addition of a C-terminal tyrosine residue by the enzymes tubulin tyrosine carboxypeptidase (TTCP) and tubulin tyrosine ligase (TTL), respectively. Acetylation of alpha chains at Lys-40 stabilizes microtubules and affects affinity and processivity of microtubule motors. This modification has a role in multiple cellular functions, ranging from cell motility, cell cycle progression or cell differentiation to intracellular trafficking and signaling.

Its subcellular location is the cytoplasm. It localises to the cytoskeleton. The catalysed reaction is GTP + H2O = GDP + phosphate + H(+). Tubulin is the major constituent of microtubules, a cylinder consisting of laterally associated linear protofilaments composed of alpha- and beta-tubulin heterodimers. Microtubules grow by the addition of GTP-tubulin dimers to the microtubule end, where a stabilizing cap forms. Below the cap, tubulin dimers are in GDP-bound state, owing to GTPase activity of alpha-tubulin. This chain is Tubulin alpha chain (TUBA), found in Prunus dulcis (Almond).